The primary structure comprises 642 residues: Threonine--tRNA ligase (642 aa).

Residues 1–61 (MPVITLPDGS…ETDATLSIIT (61 aa)) enclose the TGS domain. The interval 243 to 534 (DHRKIGKQLD…LTEETAGYFP (292 aa)) is catalytic. Residues Cys334, His385, and His511 each contribute to the Zn(2+) site.

It belongs to the class-II aminoacyl-tRNA synthetase family. In terms of assembly, homodimer. Requires Zn(2+) as cofactor.

It is found in the cytoplasm. It catalyses the reaction tRNA(Thr) + L-threonine + ATP = L-threonyl-tRNA(Thr) + AMP + diphosphate + H(+). Catalyzes the attachment of threonine to tRNA(Thr) in a two-step reaction: L-threonine is first activated by ATP to form Thr-AMP and then transferred to the acceptor end of tRNA(Thr). Also edits incorrectly charged L-seryl-tRNA(Thr). The chain is Threonine--tRNA ligase from Tolumonas auensis (strain DSM 9187 / NBRC 110442 / TA 4).